We begin with the raw amino-acid sequence, 569 residues long: Pyrophosphate--fructose 6-phosphate 1-phosphotransferase subunit beta (569 aa).

G107 contacts diphosphate. Position 201 (D201) interacts with Mg(2+). Substrate contacts are provided by residues 229-231 (TID), 268-269 (KY), 276-278 (MGR), E337, and 442-445 (YEGR). The active-site Proton acceptor is D231.

This sequence belongs to the phosphofructokinase type A (PFKA) family. PPi-dependent PFK group II subfamily. Clade 'Long' sub-subfamily. In terms of assembly, tetramer of two alpha (regulatory) and two beta (catalytic) chains. The cofactor is Mg(2+).

The protein localises to the cytoplasm. It catalyses the reaction beta-D-fructose 6-phosphate + diphosphate = beta-D-fructose 1,6-bisphosphate + phosphate + H(+). The protein operates within carbohydrate degradation; glycolysis; D-glyceraldehyde 3-phosphate and glycerone phosphate from D-glucose: step 3/4. Allosterically activated by fructose 2,6-bisphosphate. In terms of biological role, catalytic subunit of pyrophosphate--fructose 6-phosphate 1-phosphotransferase. Catalyzes the phosphorylation of D-fructose 6-phosphate, the first committing step of glycolysis. Uses inorganic phosphate (PPi) as phosphoryl donor instead of ATP like common ATP-dependent phosphofructokinases (ATP-PFKs), which renders the reaction reversible, and can thus function both in glycolysis and gluconeogenesis. The chain is Pyrophosphate--fructose 6-phosphate 1-phosphotransferase subunit beta from Solanum tuberosum (Potato).